The following is a 1235-amino-acid chain: ATP-dependent helicase/nuclease subunit A (1235 aa).

The UvrD-like helicase ATP-binding domain maps to 12–482; that stretch reads TLWTDDQWKA…IDLSQNFRSR (471 aa). Residue 33-40 coordinates ATP; sequence AAAGSGKT. The UvrD-like helicase C-terminal domain occupies 509–800; that stretch reads AAELTLGANF…RMMTIHASKG (292 aa).

This sequence belongs to the helicase family. AddA subfamily. In terms of assembly, heterodimer of AddA and AddB/RexB. The cofactor is Mg(2+).

It catalyses the reaction Couples ATP hydrolysis with the unwinding of duplex DNA by translocating in the 3'-5' direction.. The enzyme catalyses ATP + H2O = ADP + phosphate + H(+). The heterodimer acts as both an ATP-dependent DNA helicase and an ATP-dependent, dual-direction single-stranded exonuclease. Recognizes the chi site generating a DNA molecule suitable for the initiation of homologous recombination. The AddA nuclease domain is required for chi fragment generation; this subunit has the helicase and 3' -&gt; 5' nuclease activities. The protein is ATP-dependent helicase/nuclease subunit A of Listeria welshimeri serovar 6b (strain ATCC 35897 / DSM 20650 / CCUG 15529 / CIP 8149 / NCTC 11857 / SLCC 5334 / V8).